A 310-amino-acid polypeptide reads, in one-letter code: Ribosomal protein uL3 glutamine methyltransferase (310 aa).

It belongs to the protein N5-glutamine methyltransferase family. PrmB subfamily.

It carries out the reaction L-glutaminyl-[ribosomal protein uL3] + S-adenosyl-L-methionine = N(5)-methyl-L-glutaminyl-[ribosomal protein uL3] + S-adenosyl-L-homocysteine + H(+). Specifically methylates large ribosomal subunit protein uL3 on 'Gln-150'. The protein is Ribosomal protein uL3 glutamine methyltransferase of Shigella dysenteriae serotype 1 (strain Sd197).